The following is a 365-amino-acid chain: UDP-N-acetylglucosamine--N-acetylmuramyl-(pentapeptide) pyrophosphoryl-undecaprenol N-acetylglucosamine transferase (365 aa).

UDP-N-acetyl-alpha-D-glucosamine is bound by residues 17 to 19 (TGG), Asn-129, Arg-167, Ser-194, Ile-250, 269 to 274 (ALTVSE), and Gln-295.

It belongs to the glycosyltransferase 28 family. MurG subfamily.

Its subcellular location is the cell inner membrane. It catalyses the reaction di-trans,octa-cis-undecaprenyl diphospho-N-acetyl-alpha-D-muramoyl-L-alanyl-D-glutamyl-meso-2,6-diaminopimeloyl-D-alanyl-D-alanine + UDP-N-acetyl-alpha-D-glucosamine = di-trans,octa-cis-undecaprenyl diphospho-[N-acetyl-alpha-D-glucosaminyl-(1-&gt;4)]-N-acetyl-alpha-D-muramoyl-L-alanyl-D-glutamyl-meso-2,6-diaminopimeloyl-D-alanyl-D-alanine + UDP + H(+). It functions in the pathway cell wall biogenesis; peptidoglycan biosynthesis. Functionally, cell wall formation. Catalyzes the transfer of a GlcNAc subunit on undecaprenyl-pyrophosphoryl-MurNAc-pentapeptide (lipid intermediate I) to form undecaprenyl-pyrophosphoryl-MurNAc-(pentapeptide)GlcNAc (lipid intermediate II). This chain is UDP-N-acetylglucosamine--N-acetylmuramyl-(pentapeptide) pyrophosphoryl-undecaprenol N-acetylglucosamine transferase, found in Shewanella pealeana (strain ATCC 700345 / ANG-SQ1).